The following is a 400-amino-acid chain: MLEFFSRLSLVTKIIIAIILGIGVALLFPTVTPYLSLFGELFIKALKSVAPILAFVLVLSSIANFQVGHSANLRPVLLLYVVGMLLAAFSAVIASLSFPSTLYLNTVSHNNLQAPGSLADILKNLLLSFIANPVQAISEANFIGILAWAIGLGLAMRHSSDTTKQVMQDVSHAVSAIIHKVIAFAPVGIFGLVAVTFADAGLATLESYAQLLAVLLGTMLFVALVINPILVGLTIRGNPYPLVFKCLKESGITAFFTRSSAANIPVNLDLAERLGVNPSTASVSIPLGATVNLAGAAVTITVLTLATVHTLGIHVDLATMIILSVVATVSACGASGVAGGSLLLIPVACSLFGISSEIAMQVVAVGMIISVLQDSTETALNSSTDVLFTAAVDIRSRQNS.

8 consecutive transmembrane segments (helical) span residues 14–34, 48–68, 76–96, 136–156, 177–197, 211–231, 293–313, and 334–354; these read IIIAIILGIGVALLFPTVTPY, SVAPILAFVLVLSSIANFQVG, VLLLYVVGMLLAAFSAVIASL, AISEANFIGILAWAIGLGLAM, IIHKVIAFAPVGIFGLVAVTF, LLAVLLGTMLFVALVINPILV, LAGAAVTITVLTLATVHTLGI, and ASGVAGGSLLLIPVACSLFGI.

The protein belongs to the dicarboxylate/amino acid:cation symporter (DAACS) (TC 2.A.23) family.

Its subcellular location is the cell inner membrane. It catalyses the reaction L-serine(in) + Na(+)(in) = L-serine(out) + Na(+)(out). The enzyme catalyses L-threonine(in) + Na(+)(in) = L-threonine(out) + Na(+)(out). In terms of biological role, involved in the import of serine and threonine into the cell, with the concomitant import of sodium (symport system). The sequence is that of Serine/threonine transporter SstT from Acinetobacter baumannii (strain SDF).